The primary structure comprises 494 residues: DEAD-box ATP-dependent RNA helicase 20 (494 aa).

Residues 1-20 (MSRFDGRAADPGSYRDRRSE) are compositionally biased toward basic and acidic residues. The interval 1–39 (MSRFDGRAADPGSYRDRRSEGAFGGGTRAFAPTSKADSA) is disordered. A compositionally biased stretch (low complexity) spans 29–39 (AFAPTSKADSA). The Q motif motif lies at 91 to 119 (REFRDVGFPEYVLQEITKAGFVEPTPIQS). The Helicase ATP-binding domain maps to 122 to 297 (WPMALRGRDL…RNFLFDPYKV (176 aa)). 135 to 142 (AETGSGKT) provides a ligand contact to ATP. The DEAD box motif lies at 245–248 (DEAD). Residues 325–470 (KLVNLLEDIM…KVSPELANMG (146 aa)) form the Helicase C-terminal domain. The segment at 465-494 (ELANMGRGAPPPSSGHRDRYRGYGGGRSWS) is disordered.

Belongs to the DEAD box helicase family. DDX5/DBP2 subfamily.

Its subcellular location is the nucleus. The enzyme catalyses ATP + H2O = ADP + phosphate + H(+). Functionally, ATP-dependent RNA helicase involved nonsense-mediated mRNA decay and ribosome biogenesis through rRNA processing. The polypeptide is DEAD-box ATP-dependent RNA helicase 20 (Oryza sativa subsp. japonica (Rice)).